We begin with the raw amino-acid sequence, 295 residues long: Fructose-bisphosphate aldolase class 1 (295 aa).

Glu-176 functions as the Proton acceptor in the catalytic mechanism. The Schiff-base intermediate with dihydroxyacetone-P role is filled by Lys-213.

Belongs to the class I fructose-bisphosphate aldolase family.

It catalyses the reaction beta-D-fructose 1,6-bisphosphate = D-glyceraldehyde 3-phosphate + dihydroxyacetone phosphate. It participates in carbohydrate degradation; glycolysis; D-glyceraldehyde 3-phosphate and glycerone phosphate from D-glucose: step 4/4. This chain is Fructose-bisphosphate aldolase class 1, found in Clostridium beijerinckii (strain ATCC 51743 / NCIMB 8052) (Clostridium acetobutylicum).